A 220-amino-acid polypeptide reads, in one-letter code: Cytidylate kinase (220 aa).

9 to 17 (GPAASGKST) lines the ATP pocket.

The protein belongs to the cytidylate kinase family. Type 1 subfamily.

Its subcellular location is the cytoplasm. It catalyses the reaction CMP + ATP = CDP + ADP. The enzyme catalyses dCMP + ATP = dCDP + ADP. The protein is Cytidylate kinase of Thermotoga sp. (strain RQ2).